A 490-amino-acid chain; its full sequence is ATP synthase subunit beta, chloroplastic (490 aa).

Position 6 is a phosphothreonine (Thr6). Residue Ser13 is modified to Phosphoserine. An ATP-binding site is contributed by 172 to 179 (GGAGVGKT).

It belongs to the ATPase alpha/beta chains family. As to quaternary structure, F-type ATPases have 2 components, CF(1) - the catalytic core - and CF(0) - the membrane proton channel. CF(1) has five subunits: alpha(3), beta(3), gamma(1), delta(1), epsilon(1). CF(0) has four main subunits: a(1), b(1), b'(1) and c(9-12).

It is found in the plastid. Its subcellular location is the chloroplast thylakoid membrane. It carries out the reaction ATP + H2O + 4 H(+)(in) = ADP + phosphate + 5 H(+)(out). Functionally, produces ATP from ADP in the presence of a proton gradient across the membrane. The catalytic sites are hosted primarily by the beta subunits. The polypeptide is ATP synthase subunit beta, chloroplastic (Aethionema grandiflorum (Persian stone-cress)).